A 393-amino-acid polypeptide reads, in one-letter code: Squamosa promoter-binding-like protein 17 (393 aa).

Residues 40–49 show a composition bias toward low complexity; the sequence is AAAVESSSTS. The interval 40 to 67 is disordered; sequence AAAVESSSTSSGGGGKKGKGVAAAAAPP. An SBP-type zinc finger spans residues 71 to 148; it reads PPRCQVEGCG…AGHNERRRKP (78 aa). Zn(2+) contacts are provided by Cys74, Cys79, Cys96, His99, Cys115, Cys118, His122, and Cys134. The Bipartite nuclear localization signal signature appears at 131-147; that stretch reads KKSCRRRLAGHNERRRK. Residues 137 to 148 show a composition bias toward basic residues; sequence RLAGHNERRRKP. Disordered stretches follow at residues 137–158, 273–301, and 317–393; these read RLAG…SRYG, WDTT…GNNP, and GWNS…NWSL. 2 stretches are compositionally biased toward polar residues: residues 273–293 and 380–393; these read WDTT…STAS and GAFS…NWSL.

Expressed in young panicles.

The protein resides in the nucleus. Trans-acting factor that binds specifically to the consensus nucleotide sequence 5'-TNCGTACAA-3'. May be involved in panicle development. This is Squamosa promoter-binding-like protein 17 (SPL17) from Oryza sativa subsp. japonica (Rice).